A 378-amino-acid polypeptide reads, in one-letter code: Acetylornithine deacetylase (378 aa).

Residue H76 participates in Zn(2+) binding. D78 is a catalytic residue. Position 108 (D108) interacts with Zn(2+). E140 is an active-site residue. Zn(2+) contacts are provided by E141, E165, and H351.

It belongs to the peptidase M20A family. ArgE subfamily. Homodimer. It depends on Zn(2+) as a cofactor. Co(2+) serves as cofactor. The cofactor is glutathione.

The protein localises to the cytoplasm. The catalysed reaction is N(2)-acetyl-L-ornithine + H2O = L-ornithine + acetate. It participates in amino-acid biosynthesis; L-arginine biosynthesis; L-ornithine from N(2)-acetyl-L-ornithine (linear): step 1/1. Its function is as follows. Catalyzes the hydrolysis of the amide bond of N(2)-acetylated L-amino acids. Cleaves the acetyl group from N-acetyl-L-ornithine to form L-ornithine, an intermediate in L-arginine biosynthesis pathway, and a branchpoint in the synthesis of polyamines. This Aliivibrio salmonicida (strain LFI1238) (Vibrio salmonicida (strain LFI1238)) protein is Acetylornithine deacetylase.